A 272-amino-acid chain; its full sequence is HMP-PP phosphatase (272 aa).

D8 serves as the catalytic Nucleophile. 3 residues coordinate Mg(2+): D8, D10, and D212.

The protein belongs to the HAD-like hydrolase superfamily. Cof family. Mg(2+) is required as a cofactor.

It carries out the reaction 4-amino-2-methyl-5-(diphosphooxymethyl)pyrimidine + H2O = 4-amino-2-methyl-5-(phosphooxymethyl)pyrimidine + phosphate + H(+). In terms of biological role, catalyzes the hydrolysis of 4-amino-2-methyl-5-hydroxymethylpyrimidine pyrophosphate (HMP-PP) to 4-amino-2-methyl-5-hydroxymethylpyrimidine phosphate (HMP-P). The chain is HMP-PP phosphatase from Escherichia fergusonii (strain ATCC 35469 / DSM 13698 / CCUG 18766 / IAM 14443 / JCM 21226 / LMG 7866 / NBRC 102419 / NCTC 12128 / CDC 0568-73).